Consider the following 825-residue polypeptide: Ubiquitin carboxyl-terminal hydrolase 16 (825 aa).

Positions 1-20 (MGKKRTKGRSAPDTVASESA) are disordered. The UBP-type zinc finger occupies 22–141 (PVCRHLRKGL…QVVDYVRKQA (120 aa)). C24, H26, C48, C51, C73, C76, C81, H89, H93, H102, C115, and C118 together coordinate Zn(2+). A Glycyl lysine isopeptide (Lys-Gly) (interchain with G-Cter in SUMO2) cross-link involves residue K139. The span at 164 to 180 (EKESKNEQEREKSENLA) shows a compositional bias: basic and acidic residues. A disordered region spans residues 164 to 184 (EKESKNEQEREKSENLAKETI). S188 is subject to Phosphoserine. One can recognise a USP domain in the interval 195-824 (KGLSNLGNTC…QAYLLFYERI (630 aa)). C204 serves as the catalytic Nucleophile. A compositionally biased stretch (basic and acidic residues) spans 393–407 (SGKKSINDKNVKMTM). Positions 393–456 (SGKKSINDKN…KQAKNQRRQQ (64 aa)) are disordered. Acidic residues predominate over residues 408 to 419 (EEEDKDSEEEKD). Position 414 is a phosphoserine (S414). A compositionally biased stretch (basic residues) spans 436–456 (HLQKKAKKQAKKQAKNQRRQQ). 2 positions are modified to phosphoserine: S520 and S531. H759 (proton acceptor) is an active-site residue.

The protein belongs to the peptidase C19 family. USP16 subfamily. Homotetramer. Associates with late pre-40S ribosomes. Interacts with CEP78; promoting deubiquitination of tektins. Post-translationally, phosphorylated at the onset of mitosis and dephosphorylated during the metaphase/anaphase transition. Phosphorylation by AURKB enhances the deubiquitinase activity.

It is found in the nucleus. The protein resides in the cytoplasm. The enzyme catalyses Thiol-dependent hydrolysis of ester, thioester, amide, peptide and isopeptide bonds formed by the C-terminal Gly of ubiquitin (a 76-residue protein attached to proteins as an intracellular targeting signal).. Specifically deubiquitinates 'Lys-120' of histone H2A (H2AK119Ub), a specific tag for epigenetic transcriptional repression, thereby acting as a coactivator. Deubiquitination of histone H2A is a prerequisite for subsequent phosphorylation at 'Ser-11' of histone H3 (H3S10ph), and is required for chromosome segregation when cells enter into mitosis. In resting B- and T-lymphocytes, phosphorylation by AURKB leads to enhance its activity, thereby maintaining transcription in resting lymphocytes. Regulates Hox gene expression via histone H2A deubiquitination. Prefers nucleosomal substrates. Does not deubiquitinate histone H2B. Also deubiquitinates non-histone proteins, such as ribosomal protein RPS27A: deubiquitination of monoubiquitinated RPS27A promotes maturation of the 40S ribosomal subunit. Also mediates deubiquitination of tektin proteins (TEKT1, TEKT2, TEK3, TEKT4 and TEKT5), promoting their stability. This is Ubiquitin carboxyl-terminal hydrolase 16 (Usp16) from Mus musculus (Mouse).